A 35-amino-acid chain; its full sequence is Cecropin-B (35 aa).

L35 bears the Leucine amide mark.

Belongs to the cecropin family.

Its subcellular location is the secreted. Cecropins have lytic and antibacterial activity against several Gram-positive and Gram-negative bacteria. This chain is Cecropin-B, found in Antheraea pernyi (Chinese oak silk moth).